A 444-amino-acid polypeptide reads, in one-letter code: Presenilin sel-12 (444 aa).

The Cytoplasmic segment spans residues 1-45 (MPSTRRQQEGGGADAETHTVYGTNLITNRNSQEDENVVEEAELKY). A helical transmembrane segment spans residues 46 to 66 (GASHVIHLFVPVSLCMALVVF). The Lumenal portion of the chain corresponds to 67-101 (TMNTITFYSQNNGRHLLYTPFVRETDSIVEKGLMS). Residues 102–122 (LGNALVMLCVVVLMTVLLIVF) traverse the membrane as a helical segment. At 123–130 (YKYKFYKL) the chain is on the cytoplasmic side. Residues 131-151 (IHGWLIVSSFLLLFLFTTIYV) form a helical membrane-spanning segment. The Lumenal portion of the chain corresponds to 152–163 (QEVLKSFDVSPS). The helical transmembrane segment at 164-184 (ALLVLFGLGNYGVLGMMCIHW) threads the bilayer. Topologically, residues 185 to 189 (KGPLR) are cytoplasmic. The chain crosses the membrane as a helical span at residues 190 to 210 (LQQFYLITMSALMALVFIKYL). Over 211-212 (PE) the chain is Lumenal. A helical membrane pass occupies residues 213-233 (WTVWFVLFVISVWDLVAVLTP). Asp-226 is an active-site residue. Residues 234–359 (KGPLRYLVET…RHEEEERGVK (126 aa)) are Cytoplasmic-facing. The segment at 275–331 (TDPREPTSSDSNTSTAFPGEASCSSETPKRPKVKRIPQKVQIESNTTASTTQNSGVR) is disordered. Polar residues-rich tracts occupy residues 282–300 (SSDS…CSSE) and 315–329 (QIES…QNSG). A helical membrane pass occupies residues 360–380 (LGLGDFIFYSVLLGKASSYFD). The active site involves Asp-364. At 381 to 384 (WNTT) the chain is on the lumenal side. Residues 385-405 (IACYVAILIGLCFTLVLLAVF) form a helical membrane-spanning segment. The Cytoplasmic portion of the chain corresponds to 406–413 (KRALPALP). Residues 410–412 (PAL) carry the PAL motif. An intramembrane region (helical) is located at residues 414-434 (ISIFSGLIFYFCTRWIITPFV). Over 435–444 (TQVSQKCLLY) the chain is Cytoplasmic.

Belongs to the peptidase A22A family. In terms of assembly, homodimer. Component of the gamma-secretase complex, a complex probably composed of the presenilin homodimer (sel-12, hop-1 or spe-4), nicastrin (aph-2), aph-1 and pen-2. Interacts with sel-10. As to expression, expressed in most neurons.

It localises to the endoplasmic reticulum membrane. Its subcellular location is the golgi apparatus membrane. Functionally, probable catalytic subunit of the gamma-secretase complex, an endoprotease complex that catalyzes the intramembrane cleavage of integral membrane proteins such as Notch receptors (lin-12 or glp-1). Provides the major presenilin function compared to hop-1 and spe-4. Required cell-autonomously for correct neurite connectivity of the AIY cholinergic interneurons and their correct functioning in thermotaxis. Required for mesodermal patterning of muscle function. Promotes basement membrane gap formation during tissue remodeling. The polypeptide is Presenilin sel-12 (Caenorhabditis elegans).